The sequence spans 359 residues: tRNA N6-adenosine threonylcarbamoyltransferase (359 aa).

Fe cation is bound by residues histidine 115 and histidine 119. Residues 137–141 (LVSGG), aspartate 170, glycine 183, and asparagine 283 each bind substrate. Aspartate 311 serves as a coordination point for Fe cation. The segment at 328-359 (APDSLDIAPRSRWPLDEKSAPVFGTGRRGAKA) is disordered.

It belongs to the KAE1 / TsaD family. Fe(2+) serves as cofactor.

It is found in the cytoplasm. The catalysed reaction is L-threonylcarbamoyladenylate + adenosine(37) in tRNA = N(6)-L-threonylcarbamoyladenosine(37) in tRNA + AMP + H(+). Its function is as follows. Required for the formation of a threonylcarbamoyl group on adenosine at position 37 (t(6)A37) in tRNAs that read codons beginning with adenine. Is involved in the transfer of the threonylcarbamoyl moiety of threonylcarbamoyl-AMP (TC-AMP) to the N6 group of A37, together with TsaE and TsaB. TsaD likely plays a direct catalytic role in this reaction. In Brucella abortus (strain S19), this protein is tRNA N6-adenosine threonylcarbamoyltransferase.